A 256-amino-acid chain; its full sequence is Type III pantothenate kinase (256 aa).

7 to 14 is a binding site for ATP; it reads DVGNTRLK. Substrate-binding positions include Y96 and 103–106; that span reads GADR. D105 functions as the Proton acceptor in the catalytic mechanism. T133 contacts ATP. T183 is a substrate binding site.

It belongs to the type III pantothenate kinase family. Homodimer. NH4(+) serves as cofactor. The cofactor is K(+).

It localises to the cytoplasm. The catalysed reaction is (R)-pantothenate + ATP = (R)-4'-phosphopantothenate + ADP + H(+). Its pathway is cofactor biosynthesis; coenzyme A biosynthesis; CoA from (R)-pantothenate: step 1/5. Its function is as follows. Catalyzes the phosphorylation of pantothenate (Pan), the first step in CoA biosynthesis. The polypeptide is Type III pantothenate kinase (Verminephrobacter eiseniae (strain EF01-2)).